We begin with the raw amino-acid sequence, 191 residues long: Leucyl/phenylalanyl-tRNA--protein transferase (191 aa).

Belongs to the L/F-transferase family.

Its subcellular location is the cytoplasm. The enzyme catalyses N-terminal L-lysyl-[protein] + L-leucyl-tRNA(Leu) = N-terminal L-leucyl-L-lysyl-[protein] + tRNA(Leu) + H(+). It carries out the reaction N-terminal L-arginyl-[protein] + L-leucyl-tRNA(Leu) = N-terminal L-leucyl-L-arginyl-[protein] + tRNA(Leu) + H(+). It catalyses the reaction L-phenylalanyl-tRNA(Phe) + an N-terminal L-alpha-aminoacyl-[protein] = an N-terminal L-phenylalanyl-L-alpha-aminoacyl-[protein] + tRNA(Phe). Its function is as follows. Functions in the N-end rule pathway of protein degradation where it conjugates Leu, Phe and, less efficiently, Met from aminoacyl-tRNAs to the N-termini of proteins containing an N-terminal arginine or lysine. The chain is Leucyl/phenylalanyl-tRNA--protein transferase from Rubrobacter xylanophilus (strain DSM 9941 / JCM 11954 / NBRC 16129 / PRD-1).